The chain runs to 97 residues: Protein RnfH (97 aa).

The protein belongs to the UPF0125 (RnfH) family.

The polypeptide is Protein RnfH (Aliivibrio salmonicida (strain LFI1238) (Vibrio salmonicida (strain LFI1238))).